The sequence spans 100 residues: Small ribosomal subunit protein uS14 (100 aa).

The protein belongs to the universal ribosomal protein uS14 family. In terms of assembly, part of the 30S ribosomal subunit. Contacts proteins S3 and S10.

Its function is as follows. Binds 16S rRNA, required for the assembly of 30S particles and may also be responsible for determining the conformation of the 16S rRNA at the A site. This is Small ribosomal subunit protein uS14 from Prochlorococcus marinus (strain NATL1A).